Consider the following 145-residue polypeptide: Ribonuclease H (145 aa).

In terms of domain architecture, RNase H type-1 spans 1-141 (MQEVTIYSDG…ADALANRGVE (141 aa)). The Mg(2+) site is built by Asp-9, Glu-47, Asp-69, and Asp-133.

The protein belongs to the RNase H family. Monomer. It depends on Mg(2+) as a cofactor.

It localises to the cytoplasm. It carries out the reaction Endonucleolytic cleavage to 5'-phosphomonoester.. In terms of biological role, endonuclease that specifically degrades the RNA of RNA-DNA hybrids. The polypeptide is Ribonuclease H (Cupriavidus necator (strain ATCC 17699 / DSM 428 / KCTC 22496 / NCIMB 10442 / H16 / Stanier 337) (Ralstonia eutropha)).